The chain runs to 78 residues: D-alanyl carrier protein (78 aa).

Residues 1–78 (MAFRENVLEI…MIITQLEALK (78 aa)) enclose the Carrier domain. Residue S36 is modified to O-(pantetheine 4'-phosphoryl)serine.

This sequence belongs to the DltC family. 4'-phosphopantetheine is transferred from CoA to a specific serine of apo-DCP.

The protein resides in the cytoplasm. Its pathway is cell wall biogenesis; lipoteichoic acid biosynthesis. In terms of biological role, carrier protein involved in the D-alanylation of lipoteichoic acid (LTA). The loading of thioester-linked D-alanine onto DltC is catalyzed by D-alanine--D-alanyl carrier protein ligase DltA. The DltC-carried D-alanyl group is further transferred to cell membrane phosphatidylglycerol (PG) by forming an ester bond, probably catalyzed by DltD. D-alanylation of LTA plays an important role in modulating the properties of the cell wall in Gram-positive bacteria, influencing the net charge of the cell wall. The protein is D-alanyl carrier protein of Listeria welshimeri serovar 6b (strain ATCC 35897 / DSM 20650 / CCUG 15529 / CIP 8149 / NCTC 11857 / SLCC 5334 / V8).